The chain runs to 218 residues: Phosphatidylserine decarboxylase proenzyme (218 aa).

Serine 182 serves as the catalytic Schiff-base intermediate with substrate; via pyruvic acid. Serine 182 is modified (pyruvic acid (Ser); by autocatalysis).

Belongs to the phosphatidylserine decarboxylase family. PSD-A subfamily. As to quaternary structure, heterodimer of a large membrane-associated beta subunit and a small pyruvoyl-containing alpha subunit. Requires pyruvate as cofactor. Is synthesized initially as an inactive proenzyme. Formation of the active enzyme involves a self-maturation process in which the active site pyruvoyl group is generated from an internal serine residue via an autocatalytic post-translational modification. Two non-identical subunits are generated from the proenzyme in this reaction, and the pyruvate is formed at the N-terminus of the alpha chain, which is derived from the carboxyl end of the proenzyme. The post-translation cleavage follows an unusual pathway, termed non-hydrolytic serinolysis, in which the side chain hydroxyl group of the serine supplies its oxygen atom to form the C-terminus of the beta chain, while the remainder of the serine residue undergoes an oxidative deamination to produce ammonia and the pyruvoyl prosthetic group on the alpha chain.

It is found in the cell membrane. It catalyses the reaction a 1,2-diacyl-sn-glycero-3-phospho-L-serine + H(+) = a 1,2-diacyl-sn-glycero-3-phosphoethanolamine + CO2. It functions in the pathway phospholipid metabolism; phosphatidylethanolamine biosynthesis; phosphatidylethanolamine from CDP-diacylglycerol: step 2/2. Its function is as follows. Catalyzes the formation of phosphatidylethanolamine (PtdEtn) from phosphatidylserine (PtdSer). In Oleidesulfovibrio alaskensis (strain ATCC BAA-1058 / DSM 17464 / G20) (Desulfovibrio alaskensis), this protein is Phosphatidylserine decarboxylase proenzyme.